A 1009-amino-acid polypeptide reads, in one-letter code: Kinesin-like protein KIN-5C (1009 aa).

The Kinesin motor domain occupies 12–359 (NVQVLLRCRP…LDYAHRAKNI (348 aa)). 98–105 (GQTGTGKT) contributes to the ATP binding site. Positions 406 to 526 (YQEESERKVM…NSSLHQKIGR (121 aa)) form a coiled coil. 2 disordered regions span residues 862-882 (SNEQHDAEVDSARTAAEKDVT) and 987-1009 (YESFATKETKPQQLTRSPLSQVN). Composition is skewed to basic and acidic residues over residues 863 to 882 (NEQHDAEVDSARTAAEKDVT) and 987 to 996 (YESFATKETK). Residues 997–1009 (PQQLTRSPLSQVN) are compositionally biased toward polar residues.

This sequence belongs to the TRAFAC class myosin-kinesin ATPase superfamily. Kinesin family. KIN-5/BimC subfamily.

The protein resides in the cytoplasm. Its subcellular location is the cytoskeleton. The protein localises to the spindle. Functionally, responsible for microtubule translocation. May be important for the organization of phragmoplast-specific arrays of microtubules. Plays an essential role in stabilizing the mitotic spindle. Required during mitotic cytokinesis. This is Kinesin-like protein KIN-5C from Arabidopsis thaliana (Mouse-ear cress).